A 790-amino-acid chain; its full sequence is RNA-directed RNA polymerase 2a (790 aa).

The region spanning 524–639 is the RdRp catalytic domain; that stretch reads FHFKEIDFSK…GTVEELPRDQ (116 aa). The tract at residues 771–790 is disordered; sequence IKPRRVKKSHSDARSRARRA. A compositionally biased stretch (basic and acidic residues) spans 779-790; it reads SHSDARSRARRA.

This sequence belongs to the bromoviridae 2a family. Interacts with replication protein 1a.

It catalyses the reaction RNA(n) + a ribonucleoside 5'-triphosphate = RNA(n+1) + diphosphate. RNA-dependent RNA polymerase which replicates the viral genome composed of 3 RNA segments, RNA1, RNA2 and RNA3. The sequence is that of RNA-directed RNA polymerase 2a from Alfalfa mosaic virus (AMV).